Here is a 553-residue protein sequence, read N- to C-terminus: Dihydrolipoyllysine-residue acetyltransferase component of pyruvate dehydrogenase complex (553 aa).

Residues 2 to 77 enclose the Lipoyl-binding 1 domain; sequence AFSVQMPALG…EVGGELAVIG (76 aa). An N6-lipoyllysine modification is found at Lys43. The disordered stretch occupies residues 81-125; the sequence is DAGEAAAPAPEKVPAAQPESKPAPEPPPVQPTSGAPAGGDAKPVL. Residues 84–100 are compositionally biased toward low complexity; sequence EAAAPAPEKVPAAQPES. The span at 101 to 110 shows a compositional bias: pro residues; the sequence is KPAPEPPPVQ. A Lipoyl-binding 2 domain is found at 121 to 196; sequence AKPVLMPELG…PVGGELARIG (76 aa). Lys162 carries the N6-lipoyllysine modification. Disordered stretches follow at residues 204 to 238 and 278 to 321; these read APAP…AGAA and AAAE…TQKA. Residues 206 to 232 are compositionally biased toward pro residues; the sequence is APKPAPKPVPEPAPTPKAEPAPSPPAA. Residues 243-280 enclose the Peripheral subunit-binding (PSBD) domain; that stretch reads YVTPLVRKLASENNIDLAGVTGTGVGGRIRKQDVLAAA. Residues 288–300 show a composition bias toward low complexity; the sequence is APAPAAQAAAAPA. Catalysis depends on residues His523 and Asp527.

The protein belongs to the 2-oxoacid dehydrogenase family. Forms a 24-polypeptide structural core with octahedral symmetry. Part of the PDH complex, consisting of multiple copies of AceE (E1), DlaT (E2) and Lpd (E3). Requires (R)-lipoate as cofactor.

It catalyses the reaction N(6)-[(R)-dihydrolipoyl]-L-lysyl-[protein] + acetyl-CoA = N(6)-[(R)-S(8)-acetyldihydrolipoyl]-L-lysyl-[protein] + CoA. In terms of biological role, component of the pyruvate dehydrogenase (PDH) complex, that catalyzes the overall conversion of pyruvate to acetyl-CoA and CO(2). This is Dihydrolipoyllysine-residue acetyltransferase component of pyruvate dehydrogenase complex (dlaT) from Mycobacterium bovis (strain ATCC BAA-935 / AF2122/97).